Consider the following 487-residue polypeptide: Malonate-semialdehyde dehydrogenase 3 (487 aa).

NAD(+) contacts are provided by Phe154, Lys178, Glu181, Arg182, and Ser231. Cys286 functions as the Nucleophile in the catalytic mechanism. Glu386 provides a ligand contact to NAD(+).

The protein belongs to the aldehyde dehydrogenase family. IolA subfamily. Homotetramer.

The catalysed reaction is 3-oxopropanoate + NAD(+) + CoA + H2O = hydrogencarbonate + acetyl-CoA + NADH + H(+). The enzyme catalyses 2-methyl-3-oxopropanoate + NAD(+) + CoA + H2O = propanoyl-CoA + hydrogencarbonate + NADH + H(+). It participates in polyol metabolism; myo-inositol degradation into acetyl-CoA; acetyl-CoA from myo-inositol: step 7/7. Its function is as follows. Catalyzes the oxidation of malonate semialdehyde (MSA) and methylmalonate semialdehyde (MMSA) into acetyl-CoA and propanoyl-CoA, respectively. Is involved in a myo-inositol catabolic pathway. Bicarbonate, and not CO2, is the end-product of the enzymatic reaction. This chain is Malonate-semialdehyde dehydrogenase 3, found in Bacillus cereus (strain ZK / E33L).